A 193-amino-acid chain; its full sequence is MFNLLKQVSDYAKESIEAAKYIGQGLSVTFDHMRRRPVTVQYPYEKLIPSERFRGRIHFEFDKCIACEVCVRVCPINLPVVDWEFNKAVKKKELKHYSIDFGVCIFCGNCVEYCPTNCLSMTEEYELATYDRHELNYDNVALGRLPYKVTEDPMVTPLRELGYLPKGVLDPHDLPSGNQRSGKRPEEIIAESD.

4Fe-4S ferredoxin-type domains are found at residues 55 to 84 (GRIHFEFDKCIACEVCVRVCPINLPVVDWE) and 95 to 124 (KHYSIDFGVCIFCGNCVEYCPTNCLSMTEE). Positions 64, 67, 70, 74, 104, 107, 110, and 114 each coordinate [4Fe-4S] cluster. Residues 169–193 (LDPHDLPSGNQRSGKRPEEIIAESD) form a disordered region.

Belongs to the complex I 23 kDa subunit family. As to quaternary structure, NDH-1 is composed of at least 11 different subunits. Requires [4Fe-4S] cluster as cofactor.

The protein localises to the cellular thylakoid membrane. It catalyses the reaction a plastoquinone + NADH + (n+1) H(+)(in) = a plastoquinol + NAD(+) + n H(+)(out). The catalysed reaction is a plastoquinone + NADPH + (n+1) H(+)(in) = a plastoquinol + NADP(+) + n H(+)(out). NDH-1 shuttles electrons from an unknown electron donor, via FMN and iron-sulfur (Fe-S) centers, to quinones in the respiratory and/or the photosynthetic chain. The immediate electron acceptor for the enzyme in this species is believed to be plastoquinone. Couples the redox reaction to proton translocation, and thus conserves the redox energy in a proton gradient. This is NAD(P)H-quinone oxidoreductase subunit I from Rippkaea orientalis (strain PCC 8801 / RF-1) (Cyanothece sp. (strain PCC 8801)).